We begin with the raw amino-acid sequence, 424 residues long: Tyrosine--tRNA ligase (424 aa).

Residue tyrosine 37 coordinates L-tyrosine. A 'HIGH' region motif is present at residues 42–51; that stretch reads PTADSLHLGH. Residue lysine 144 is modified to N6-acetyllysine. Tyrosine 175 and glutamine 179 together coordinate L-tyrosine. Residues 235–239 carry the 'KMSKS' region motif; sequence KFGKT. Lysine 238 lines the ATP pocket. The S4 RNA-binding domain occupies 357 to 414; that stretch reads ADLMQALVDSELQPSRGQARKTIASNAITINGEKQSDPEYFFKEEDRLFGRFTLLRRG.

This sequence belongs to the class-I aminoacyl-tRNA synthetase family. TyrS type 1 subfamily. As to quaternary structure, homodimer.

The protein resides in the cytoplasm. The catalysed reaction is tRNA(Tyr) + L-tyrosine + ATP = L-tyrosyl-tRNA(Tyr) + AMP + diphosphate + H(+). Functionally, catalyzes the attachment of tyrosine to tRNA(Tyr) in a two-step reaction: tyrosine is first activated by ATP to form Tyr-AMP and then transferred to the acceptor end of tRNA(Tyr). The chain is Tyrosine--tRNA ligase from Escherichia coli O127:H6 (strain E2348/69 / EPEC).